The following is a 197-amino-acid chain: dTTP/UTP pyrophosphatase (197 aa).

D70 serves as the catalytic Proton acceptor.

This sequence belongs to the Maf family. YhdE subfamily. A divalent metal cation is required as a cofactor.

The protein localises to the cytoplasm. The enzyme catalyses dTTP + H2O = dTMP + diphosphate + H(+). The catalysed reaction is UTP + H2O = UMP + diphosphate + H(+). Nucleoside triphosphate pyrophosphatase that hydrolyzes dTTP and UTP. May have a dual role in cell division arrest and in preventing the incorporation of modified nucleotides into cellular nucleic acids. The polypeptide is dTTP/UTP pyrophosphatase (yceF2) (Shigella sonnei (strain Ss046)).